Reading from the N-terminus, the 551-residue chain is Trigger factor (551 aa).

Positions 165–250 (GDLVVLDFAG…ATDVRVPGET (86 aa)) constitute a PPIase FKBP-type domain. The tract at residues 442–551 (ADDDTIGKGH…APAKKKAAAE (110 aa)) is disordered. Residues 458-472 (GHDHHDHDHDHDHAA) are compositionally biased toward basic and acidic residues. Residues 513–541 (EAAPAPKKAPAKKAAAAKAEEAPAAAPKK) show a composition bias toward low complexity. Positions 542-551 (APAKKKAAAE) are enriched in basic residues.

The protein belongs to the FKBP-type PPIase family. Tig subfamily.

Its subcellular location is the cytoplasm. The catalysed reaction is [protein]-peptidylproline (omega=180) = [protein]-peptidylproline (omega=0). Functionally, involved in protein export. Acts as a chaperone by maintaining the newly synthesized protein in an open conformation. Functions as a peptidyl-prolyl cis-trans isomerase. This chain is Trigger factor, found in Rhizorhabdus wittichii (strain DSM 6014 / CCUG 31198 / JCM 15750 / NBRC 105917 / EY 4224 / RW1) (Sphingomonas wittichii).